The sequence spans 406 residues: UPF0754 membrane protein CYA_0973 (406 aa).

Helical transmembrane passes span 1 to 21 (MALW…YFTN) and 385 to 405 (IVNL…LFLL).

This sequence belongs to the UPF0754 family.

The protein localises to the cell inner membrane. The sequence is that of UPF0754 membrane protein CYA_0973 from Synechococcus sp. (strain JA-3-3Ab) (Cyanobacteria bacterium Yellowstone A-Prime).